The primary structure comprises 865 residues: Protein translocase subunit SecA (865 aa).

ATP is bound by residues Q93, 111–115 (GEGKT), and D501. Zn(2+)-binding residues include C841, C843, C852, and C853.

Belongs to the SecA family. Monomer and homodimer. Part of the essential Sec protein translocation apparatus which comprises SecA, SecYEG and auxiliary proteins SecDF-YajC and YidC. Zn(2+) serves as cofactor.

The protein resides in the cell inner membrane. The protein localises to the cytoplasm. The catalysed reaction is ATP + H2O + cellular proteinSide 1 = ADP + phosphate + cellular proteinSide 2.. Its function is as follows. Part of the Sec protein translocase complex. Interacts with the SecYEG preprotein conducting channel. Has a central role in coupling the hydrolysis of ATP to the transfer of proteins into and across the cell membrane, serving as an ATP-driven molecular motor driving the stepwise translocation of polypeptide chains across the membrane. The chain is Protein translocase subunit SecA from Helicobacter pylori (strain Shi470).